A 396-amino-acid chain; its full sequence is Deoxyguanosinetriphosphate triphosphohydrolase-like protein (396 aa).

One can recognise an HD domain in the interval 69–211; sequence RLSHSLEVSQ…AALADDIAYN (143 aa).

This sequence belongs to the dGTPase family. Type 2 subfamily.

This is Deoxyguanosinetriphosphate triphosphohydrolase-like protein from Parvibaculum lavamentivorans (strain DS-1 / DSM 13023 / NCIMB 13966).